Consider the following 399-residue polypeptide: RNA-binding protein cabeza (399 aa).

Residues 1 to 12 show a composition bias toward gly residues; it reads MERGGYGGGSGQ. The disordered stretch occupies residues 1 to 82; sequence MERGGYGGGS…RGGNSYGNGG (82 aa). Polar residues predominate over residues 24–34; that stretch reads YQQMPNKTGNY. Gly residues predominate over residues 43 to 69; that stretch reads KQGGGYDSGSGHRGSGGSGNGGGGGGS. The RRM domain occupies 120 to 206; it reads DTIFVSGMDP…NAIKVSLAQR (87 aa). 2 disordered regions span residues 209–276 and 300–399; these read NWNK…QPRD and TPKG…SRPY. Residues 212–271 are compositionally biased toward gly residues; sequence KGGGGGGGGGGRGGFGGRRGGGGGGGGGGGGGGRFDRGGGGGGGRYDRGGGGGGGGGGGN. The RanBP2-type zinc finger occupies 275-304; sequence RDGDWKCNSCNNTNFAWRNECNRCKTPKGD. Gly residues-rich tracts occupy residues 308–339, 347–361, and 368–380; these read SSGG…GGGY, NSQG…GGGY, and NGGG…GGGG. Low complexity predominate over residues 387 to 399; that stretch reads PMRNDGGMRSRPY.

It belongs to the RRM TET family. As to expression, ubiquitous. Enriched in the brain and central nervous system during embryogenesis. Enriched in the adult head. Embryos contain both isoforms A and B, whereas later in development (heads and torsos) only isoform B is detected.

It is found in the nucleus. Its function is as follows. May participate in a function common to the expression of most genes transcribed by RNA polymerase II. The sequence is that of RNA-binding protein cabeza (caz) from Drosophila melanogaster (Fruit fly).